Reading from the N-terminus, the 310-residue chain is Porphobilinogen deaminase (310 aa).

Cys242 carries the post-translational modification S-(dipyrrolylmethanemethyl)cysteine.

It belongs to the HMBS family. Monomer. Requires dipyrromethane as cofactor.

It carries out the reaction 4 porphobilinogen + H2O = hydroxymethylbilane + 4 NH4(+). Its pathway is porphyrin-containing compound metabolism; protoporphyrin-IX biosynthesis; coproporphyrinogen-III from 5-aminolevulinate: step 2/4. In terms of biological role, tetrapolymerization of the monopyrrole PBG into the hydroxymethylbilane pre-uroporphyrinogen in several discrete steps. The polypeptide is Porphobilinogen deaminase (Shewanella pealeana (strain ATCC 700345 / ANG-SQ1)).